Reading from the N-terminus, the 275-residue chain is tRNA pseudouridine synthase B (275 aa).

The Nucleophile role is filled by aspartate 38.

The protein belongs to the pseudouridine synthase TruB family. Type 1 subfamily.

The enzyme catalyses uridine(55) in tRNA = pseudouridine(55) in tRNA. Functionally, responsible for synthesis of pseudouridine from uracil-55 in the psi GC loop of transfer RNAs. This Nitratiruptor sp. (strain SB155-2) protein is tRNA pseudouridine synthase B.